The following is a 399-amino-acid chain: Beta-1,4-galactosyltransferase 1 (399 aa).

The Cytoplasmic segment spans residues 1–24; that stretch reads MRFREQFLGGSAAMPGATLQRACR. Residues 25 to 44 form a helical; Signal-anchor for type II membrane protein membrane-spanning segment; the sequence is LLVAVCALHLGVTLVYYLSG. The Lumenal portion of the chain corresponds to 45-399; that stretch reads RDLSRLPQLV…QITVDIGTPR (355 aa). The segment at 61–113 is disordered; that stretch reads QGGTNGAAASKQPPGEQRPRGARPPPPLGVSPKPRPGLDSSPGAASGPGLKSN. The span at 82 to 95 shows a compositional bias: pro residues; that stretch reads ARPPPPLGVSPKPR. N113 is a glycosylation site (N-linked (GlcNAc...) asparagine). A disulfide bond links C131 and C173. UDP-alpha-D-galactose contacts are provided by residues 184–188, 223–225, 250–251, and W311; these read PFRNR, FNR, and VD. Residues C244 and C263 are joined by a disulfide bond. D251 provides a ligand contact to Mn(2+). Position 313–316 (313–316) interacts with N-acetyl-D-glucosamine; sequence GEDD. H344 provides a ligand contact to Mn(2+). A UDP-alpha-D-galactose-binding site is contributed by 344-346; the sequence is HSR. R356 is an N-acetyl-D-glucosamine binding site.

Belongs to the glycosyltransferase 7 family. Homodimer; and heterodimer with alpha-lactalbumin to form lactose synthase. Interacts (via N-terminal cytoplasmic domain) with UBE2Q1 (via N-terminus); the interaction is direct. The cofactor is Mn(2+). The soluble form derives from the membrane forms by proteolytic processing.

The protein localises to the golgi apparatus. It is found in the golgi stack membrane. The protein resides in the cell membrane. Its subcellular location is the cell surface. It localises to the cell projection. The protein localises to the filopodium. It is found in the secreted. It carries out the reaction D-glucose + UDP-alpha-D-galactose = lactose + UDP + H(+). The enzyme catalyses an N-acetyl-beta-D-glucosaminyl derivative + UDP-alpha-D-galactose = a beta-D-galactosyl-(1-&gt;4)-N-acetyl-beta-D-glucosaminyl derivative + UDP + H(+). It catalyses the reaction N-acetyl-D-glucosamine + UDP-alpha-D-galactose = beta-D-galactosyl-(1-&gt;4)-N-acetyl-D-glucosamine + UDP + H(+). The catalysed reaction is a beta-D-GlcNAc-(1-&gt;3)-beta-D-Gal-(1-&gt;4)-beta-D-Glc-(1&lt;-&gt;1)-Cer(d18:1(4E)) + UDP-alpha-D-galactose = a neolactoside nLc4Cer(d18:1(4E)) + UDP + H(+). It carries out the reaction a beta-D-glucosylceramide + UDP-alpha-D-galactose = a beta-D-galactosyl-(1-&gt;4)-beta-D-glucosyl-(1&lt;-&gt;1)-ceramide + UDP + H(+). The enzyme catalyses a neolactoside IV(3)-beta-GlcNAc-nLc4Cer + UDP-alpha-D-galactose = a neolactoside nLc6Cer + UDP + H(+). Its pathway is protein modification; protein glycosylation. Its function is as follows. The Golgi complex form catalyzes the production of lactose in the lactating mammary gland and could also be responsible for the synthesis of complex-type N-linked oligosaccharides in many glycoproteins as well as the carbohydrate moieties of glycolipids. The cell surface form functions as a recognition molecule during a variety of cell to cell and cell to matrix interactions, as those occurring during development and egg fertilization, by binding to specific oligosaccharide ligands on opposing cells or in the extracellular matrix. The secreted form is responsible for the synthesis of complex-type to N-linked oligosaccharides in many glycoproteins as well as the carbohydrate moieties of glycolipids. This is Beta-1,4-galactosyltransferase 1 from Mus musculus (Mouse).